Consider the following 591-residue polypeptide: Phosphoglucan phosphatase LSF1, chloroplastic (591 aa).

The transit peptide at 1–61 (MAFLQQISGL…RRRRVVLRVV (61 aa)) directs the protein to the chloroplast. Residues 291 to 453 (RYSKITEQIY…VDDGKHDGTP (163 aa)) form the Tyrosine-protein phosphatase domain. The active-site Phosphocysteine intermediate is cysteine 390. 390-396 (CTTGFDR) is a binding site for substrate.

It is found in the plastid. It localises to the chloroplast. Its function is as follows. Starch granule-associated phosphoglucan phosphatase involved in the control of starch accumulation. Participates in the regulation of the initial steps of starch degradation at the granule surface. May release a different set of phosphate groups from those removed by DSP4. The chain is Phosphoglucan phosphatase LSF1, chloroplastic (LSF1) from Arabidopsis thaliana (Mouse-ear cress).